The following is a 226-amino-acid chain: Deoxyribose-phosphate aldolase (226 aa).

Glu-96 (proton donor/acceptor) is an active-site residue. The Schiff-base intermediate with acetaldehyde role is filled by Lys-157. Catalysis depends on Lys-185, which acts as the Proton donor/acceptor.

This sequence belongs to the DeoC/FbaB aldolase family. DeoC type 1 subfamily.

The protein localises to the cytoplasm. The enzyme catalyses 2-deoxy-D-ribose 5-phosphate = D-glyceraldehyde 3-phosphate + acetaldehyde. Its pathway is carbohydrate degradation; 2-deoxy-D-ribose 1-phosphate degradation; D-glyceraldehyde 3-phosphate and acetaldehyde from 2-deoxy-alpha-D-ribose 1-phosphate: step 2/2. Functionally, catalyzes a reversible aldol reaction between acetaldehyde and D-glyceraldehyde 3-phosphate to generate 2-deoxy-D-ribose 5-phosphate. This Gloeobacter violaceus (strain ATCC 29082 / PCC 7421) protein is Deoxyribose-phosphate aldolase.